The following is a 95-amino-acid chain: Small ribosomal subunit protein bS18 (95 aa).

This sequence belongs to the bacterial ribosomal protein bS18 family. In terms of assembly, part of the 30S ribosomal subunit. Forms a tight heterodimer with protein bS6.

Functionally, binds as a heterodimer with protein bS6 to the central domain of the 16S rRNA, where it helps stabilize the platform of the 30S subunit. In Ehrlichia ruminantium (strain Gardel), this protein is Small ribosomal subunit protein bS18.